A 503-amino-acid chain; its full sequence is Transcription termination/antitermination protein NusA (503 aa).

Residues 139 to 203 (GEIINGIVKR…KGPQIFLSRV (65 aa)) form the S1 motif domain. Positions 308–378 (RHKVEVVVSQ…LDVEEVIGQL (71 aa)) constitute a KH domain.

Belongs to the NusA family. In terms of assembly, monomer. Binds directly to the core enzyme of the DNA-dependent RNA polymerase and to nascent RNA.

It is found in the cytoplasm. Functionally, participates in both transcription termination and antitermination. This is Transcription termination/antitermination protein NusA from Rickettsia conorii (strain ATCC VR-613 / Malish 7).